A 539-amino-acid polypeptide reads, in one-letter code: Heparanase-like protein 2 (539 aa).

The signal sequence occupies residues 1-21; that stretch reads MGFNVVVFLSCLLLLPPVTFG. 3 N-linked (GlcNAc...) asparagine glycosylation sites follow: N143, N163, and N181. E198 serves as the catalytic Proton donor. N300 is a glycosylation site (N-linked (GlcNAc...) asparagine). E316 functions as the Nucleophile in the catalytic mechanism. An N-linked (GlcNAc...) asparagine glycan is attached at N421.

This sequence belongs to the glycosyl hydrolase 79 family.

It is found in the lysosome membrane. The protein resides in the secreted. Endoglycosidase which is a cell surface and extracellular matrix-degrading enzyme. Cleaves heparan sulfate proteoglycans (HSPGs) into heparan sulfate side chains and core proteoglycans. This Arabidopsis thaliana (Mouse-ear cress) protein is Heparanase-like protein 2.